Consider the following 673-residue polypeptide: UvrABC system protein B (673 aa).

The Helicase ATP-binding domain maps to 26 to 414 (EGLEDGLAHQ…GDEVVDQVVR (389 aa)). 39–46 (GVTGSGKT) serves as a coordination point for ATP. Positions 92–115 (YYDYYQPEAYVPSSDTFIEKDASV) match the Beta-hairpin motif. Residues 431–597 (QVDDLLSEIR…GLNKKVVDIL (167 aa)) enclose the Helicase C-terminal domain. The region spanning 633 to 668 (QQKIHELEEQMMQHAQNLEFEEAAQIRDQLHQLREL) is the UVR domain.

It belongs to the UvrB family. In terms of assembly, forms a heterotetramer with UvrA during the search for lesions. Interacts with UvrC in an incision complex.

It localises to the cytoplasm. Its function is as follows. The UvrABC repair system catalyzes the recognition and processing of DNA lesions. A damage recognition complex composed of 2 UvrA and 2 UvrB subunits scans DNA for abnormalities. Upon binding of the UvrA(2)B(2) complex to a putative damaged site, the DNA wraps around one UvrB monomer. DNA wrap is dependent on ATP binding by UvrB and probably causes local melting of the DNA helix, facilitating insertion of UvrB beta-hairpin between the DNA strands. Then UvrB probes one DNA strand for the presence of a lesion. If a lesion is found the UvrA subunits dissociate and the UvrB-DNA preincision complex is formed. This complex is subsequently bound by UvrC and the second UvrB is released. If no lesion is found, the DNA wraps around the other UvrB subunit that will check the other stand for damage. The protein is UvrABC system protein B of Salmonella typhi.